Here is a 115-residue protein sequence, read N- to C-terminus: Pre-histone-like nucleoprotein (115 aa).

Positions 2 to 23 (PILISPSDNTGWGLGKLRIRAT) are excised as a propeptide. Positions 85–99 (GRRTARSARRRSARK) are enriched in basic residues. The interval 85–115 (GRRTARSARRRSARKSRSEKTGPRIRYTRRI) is disordered. A Nuclear localization signal motif is present at residues 114–115 (RI).

The protein belongs to the adenoviridae histone-like nucleoprotein family. As to quaternary structure, interacts with the core-capsid bridging protein; this interaction bridges the virus core to the capsid. Interacts with host NPM1; this interaction might play a role in placing the pre-histone-like nucleoprotein on the viral DNA or regulating viral gene expression. Interacts with host HMGB1; this interaction inhibits host immune response. Post-translationally, cleaved near the N-terminus by the viral protease during virion maturation to form the mature protein.

It localises to the virion. Its subcellular location is the host nucleus. The protein localises to the host nucleolus. Plays a role in the inhibition of host immune response within the nucleus. Interacts with cellular nucleosomes and immobilizes the host immune danger signal HMGB1 on chromatin. In turn, prevents HMGB1 release out of the cell and thus decreases inflammation. Also plays a role in the wrapping and condensation of the viral DNA. May also promote viral genome import into the nucleus. The sequence is that of Pre-histone-like nucleoprotein from Pantherophis guttatus (Corn snake).